The following is a 668-amino-acid chain: Threonine--tRNA ligase (668 aa).

In terms of domain architecture, TGS spans 1–64 (MSQAISLTFP…TDGKIEIITR (64 aa)). Residues 245–553 (DHRKLGREMD…LIENFAGHMP (309 aa)) form a catalytic region. Positions 347, 398, and 530 each coordinate Zn(2+).

It belongs to the class-II aminoacyl-tRNA synthetase family. Homodimer. It depends on Zn(2+) as a cofactor.

Its subcellular location is the cytoplasm. The enzyme catalyses tRNA(Thr) + L-threonine + ATP = L-threonyl-tRNA(Thr) + AMP + diphosphate + H(+). Its function is as follows. Catalyzes the attachment of threonine to tRNA(Thr) in a two-step reaction: L-threonine is first activated by ATP to form Thr-AMP and then transferred to the acceptor end of tRNA(Thr). Also edits incorrectly charged L-seryl-tRNA(Thr). The sequence is that of Threonine--tRNA ligase from Rhizobium etli (strain CIAT 652).